Here is a 470-residue protein sequence, read N- to C-terminus: Cysteine--tRNA ligase (470 aa).

Cysteine 31 is a Zn(2+) binding site. The 'HIGH' region signature appears at 33-43 (PTVYDYVHIGH). Positions 209, 234, and 238 each coordinate Zn(2+). The 'KMSKS' region motif lies at 266–270 (KMSKS). Lysine 269 is a binding site for ATP.

This sequence belongs to the class-I aminoacyl-tRNA synthetase family. Requires Zn(2+) as cofactor.

It is found in the cytoplasm. The enzyme catalyses tRNA(Cys) + L-cysteine + ATP = L-cysteinyl-tRNA(Cys) + AMP + diphosphate. This is Cysteine--tRNA ligase from Saccharolobus solfataricus (strain ATCC 35092 / DSM 1617 / JCM 11322 / P2) (Sulfolobus solfataricus).